We begin with the raw amino-acid sequence, 195 residues long: ATP-dependent Clp protease proteolytic subunit (195 aa).

The active-site Nucleophile is the Ser-98. His-123 is a catalytic residue.

Belongs to the peptidase S14 family. In terms of assembly, fourteen ClpP subunits assemble into 2 heptameric rings which stack back to back to give a disk-like structure with a central cavity, resembling the structure of eukaryotic proteasomes.

It is found in the cytoplasm. The catalysed reaction is Hydrolysis of proteins to small peptides in the presence of ATP and magnesium. alpha-casein is the usual test substrate. In the absence of ATP, only oligopeptides shorter than five residues are hydrolyzed (such as succinyl-Leu-Tyr-|-NHMec, and Leu-Tyr-Leu-|-Tyr-Trp, in which cleavage of the -Tyr-|-Leu- and -Tyr-|-Trp bonds also occurs).. Cleaves peptides in various proteins in a process that requires ATP hydrolysis. Has a chymotrypsin-like activity. Plays a major role in the degradation of misfolded proteins. This chain is ATP-dependent Clp protease proteolytic subunit, found in Caldanaerobacter subterraneus subsp. tengcongensis (strain DSM 15242 / JCM 11007 / NBRC 100824 / MB4) (Thermoanaerobacter tengcongensis).